A 160-amino-acid polypeptide reads, in one-letter code: Cyanate hydratase (160 aa).

Active-site residues include Arg100, Glu103, and Ser126.

It belongs to the cyanase family.

It carries out the reaction cyanate + hydrogencarbonate + 3 H(+) = NH4(+) + 2 CO2. In terms of biological role, catalyzes the reaction of cyanate with bicarbonate to produce ammonia and carbon dioxide. The protein is Cyanate hydratase of Aspergillus niger (strain ATCC MYA-4892 / CBS 513.88 / FGSC A1513).